A 151-amino-acid polypeptide reads, in one-letter code: uncharacterized protein (151 aa).

The Nudix hydrolase domain maps to 6 to 143 (MKTLSAGIIF…QWQYVMGPSL (138 aa)).

This is an uncharacterized protein from Escherichia coli (Bacteriophage T4).